A 276-amino-acid polypeptide reads, in one-letter code: Nickel import system permease protein NikC (276 aa).

The next 5 helical transmembrane spans lie at 10–30 (LIFF…FFVS), 73–93 (LFVT…LGLF), 108–128 (FIDV…ASFF), 186–206 (IIPA…LYIS), and 238–258 (IMLI…NLTG). The region spanning 69–258 (ARSTLFVTVL…ITILIFNLTG (190 aa)) is the ABC transmembrane type-1 domain.

It belongs to the binding-protein-dependent transport system permease family. OppBC subfamily. As to quaternary structure, the complex is composed of two ATP-binding proteins (NikD and NikE), two transmembrane proteins (NikB and NikC) and a solute-binding protein (NikA).

The protein resides in the cell membrane. Part of the ABC transporter complex NikABCDE (Opp2) involved in nickel import. Probably responsible for the translocation of the substrate across the membrane. The chain is Nickel import system permease protein NikC from Staphylococcus aureus (strain Mu50 / ATCC 700699).